The primary structure comprises 75 residues: uncharacterized protein (75 aa).

This is an uncharacterized protein from Rickettsia conorii (strain ATCC VR-613 / Malish 7).